A 494-amino-acid polypeptide reads, in one-letter code: V-type proton ATPase subunit B (494 aa).

Position 384 (arginine 384) interacts with ATP.

The protein belongs to the ATPase alpha/beta chains family. In terms of assembly, V-ATPase is a heteromultimeric enzyme made up of two complexes: the ATP-hydrolytic V1 complex and the proton translocation V0 complex. The V1 complex consists of three catalytic AB heterodimers that form a heterohexamer, three peripheral stalks each consisting of EG heterodimers, one central rotor including subunits D and F, and the regulatory subunits C and H. The proton translocation complex V0 consists of the proton transport subunit a, a ring of proteolipid subunits c9c'', rotary subunit d, subunits e and f, and the accessory subunits VhaAC45 and ATP6AP2.

Its function is as follows. Non-catalytic subunit of the V1 complex of vacuolar(H+)-ATPase (V-ATPase), a multisubunit enzyme composed of a peripheral complex (V1) that hydrolyzes ATP and a membrane integral complex (V0) that translocates protons. V-ATPase is responsible for acidifying and maintaining the pH of intracellular compartments and in some cell types, is targeted to the plasma membrane, where it is responsible for acidifying the extracellular environment. Essential for the proper assembly and activity of V-ATPase. The polypeptide is V-type proton ATPase subunit B (VHA55) (Manduca sexta (Tobacco hawkmoth)).